A 634-amino-acid chain; its full sequence is Glutamate--tRNA ligase (634 aa).

The 'HIGH' region motif lies at 108-118 (PNPSGPLHIGH).

It belongs to the class-I aminoacyl-tRNA synthetase family. Glutamate--tRNA ligase type 2 subfamily.

It localises to the cytoplasm. It catalyses the reaction tRNA(Glu) + L-glutamate + ATP = L-glutamyl-tRNA(Glu) + AMP + diphosphate. In terms of biological role, catalyzes the attachment of glutamate to tRNA(Glu) in a two-step reaction: glutamate is first activated by ATP to form Glu-AMP and then transferred to the acceptor end of tRNA(Glu). In Methanoregula boonei (strain DSM 21154 / JCM 14090 / 6A8), this protein is Glutamate--tRNA ligase.